The following is a 491-amino-acid chain: Transcription factor AP-2-alpha (491 aa).

A disordered region spans residues 74–161 (GASNGTARLP…GQRQSQESGL (88 aa)). The PPxY motif signature appears at 111-116 (YFPPPY). Composition is skewed to low complexity over residues 119–128 (IYPQSQDPYS) and 142–155 (QPQP…GQRQ). Residues K231 and K238 each participate in a glycyl lysine isopeptide (Lys-Gly) (interchain with G-Cter in SUMO2) cross-link. At S293 the chain carries Phosphoserine; by PKA. Positions 334-464 (RRKAANVTLL…YLTEALKAMD (131 aa)) are H-S-H (helix-span-helix), dimerization. Residues 468-481 (LSNNPNSHTDNSAK) are compositionally biased toward polar residues. Residues 468 to 491 (LSNNPNSHTDNSAKSSDKEEKHRK) are disordered. Residues 482–491 (SSDKEEKHRK) are compositionally biased toward basic and acidic residues.

The protein belongs to the AP-2 family. Binds DNA as a dimer. Can form homodimers or heterodimers with other AP-2 family members. Interacts with WWOX. Interacts with CITED4. Interacts with UBE2I. Interacts with RALBP1 in a complex also containing EPN1 and NUMB during interphase and mitosis. Interacts with KCTD1; this interaction represses transcription activation. Interacts (via C-terminus) with CITED2 (via C-terminus); the interaction stimulates TFAP2A-transcriptional activation. Interacts (via N-terminus) with EP300 (via N-terminus); the interaction requires CITED2. Interacts with KCTD15; this interaction inhibits TFAP2A transcriptional activation.

It localises to the nucleus. In terms of biological role, sequence-specific DNA-binding protein that interacts with inducible viral and cellular enhancer elements to regulate transcription of selected genes. AP-2 factors bind to the consensus sequence 5'-GCCNNNGGC-3' and activate genes involved in a large spectrum of important biological functions including proper eye, face, body wall, limb and neural tube development. They also suppress a number of genes including MCAM/MUC18, C/EBP alpha and MYC. AP-2-alpha is the only AP-2 protein required for early morphogenesis of the lens vesicle. Together with the CITED2 coactivator, stimulates the PITX2 P1 promoter transcription activation. Associates with chromatin to the PITX2 P1 promoter region. This is Transcription factor AP-2-alpha (TFAP2A) from Ovis aries (Sheep).